Here is a 155-residue protein sequence, read N- to C-terminus: MSTATAPRLPAPRSGASYHYQTTAAPAANTLSFAGHARQAARASGPRLSSRFVASAAAVLHKVKLVGPDGTEHEFEAPDDTYILEAAETAGVELPFSCRAGSCSTCAGRMSAGEVDQSEGSFLDDGQMAEGYLLTCISYPKADCVIHTHKEEDLY.

The N-terminal 58 residues, 1-58, are a transit peptide targeting the chloroplast; the sequence is MSTATAPRLPAPRSGASYHYQTTAAPAANTLSFAGHARQAARASGPRLSSRFVASAAA. The 2Fe-2S ferredoxin-type domain maps to 61–152; sequence HKVKLVGPDG…DCVIHTHKEE (92 aa). Positions 98, 103, 106, and 136 each coordinate [2Fe-2S] cluster.

This sequence belongs to the 2Fe2S plant-type ferredoxin family. Requires [2Fe-2S] cluster as cofactor.

It is found in the plastid. The protein resides in the chloroplast. Its function is as follows. Ferredoxins are iron-sulfur proteins that transfer electrons in a wide variety of metabolic reactions. In Zea mays (Maize), this protein is Ferredoxin-6, chloroplastic (FDX6).